Consider the following 310-residue polypeptide: 4-diphosphocytidyl-2-C-methyl-D-erythritol kinase (310 aa).

Residue lysine 10 is part of the active site. 102-112 (PVAGGMAGGSA) lines the ATP pocket. Aspartate 144 is an active-site residue. The tract at residues 289-310 (TRTARGPAAGAQLLPGPVGSFA) is disordered.

The protein belongs to the GHMP kinase family. IspE subfamily.

The catalysed reaction is 4-CDP-2-C-methyl-D-erythritol + ATP = 4-CDP-2-C-methyl-D-erythritol 2-phosphate + ADP + H(+). Its pathway is isoprenoid biosynthesis; isopentenyl diphosphate biosynthesis via DXP pathway; isopentenyl diphosphate from 1-deoxy-D-xylulose 5-phosphate: step 3/6. In terms of biological role, catalyzes the phosphorylation of the position 2 hydroxy group of 4-diphosphocytidyl-2C-methyl-D-erythritol. The protein is 4-diphosphocytidyl-2-C-methyl-D-erythritol kinase of Cutibacterium acnes (strain DSM 16379 / KPA171202) (Propionibacterium acnes).